Reading from the N-terminus, the 162-residue chain is Eukaryotic translation initiation factor 5 (162 aa).

The interval 59–162 (PPNLNPAVQG…EKDRMDIFYE (104 aa)) is disordered. Residues 85 to 109 (GDTNGDTSQVDDQNESLEASVNENS) are compositionally biased toward polar residues. Over residues 148–162 (DLEKREKDRMDIFYE) the composition is skewed to basic and acidic residues.

The protein belongs to the eIF-2-beta/eIF-5 family.

Functionally, catalyzes the hydrolysis of GTP bound to the 40S ribosomal initiation complex (40S.mRNA.Met-tRNA[F].eIF-2.GTP) with the subsequent joining of a 60S ribosomal subunit resulting in the release of eIF-2 and the guanine nucleotide. The subsequent joining of a 60S ribosomal subunit results in the formation of a functional 80S initiation complex (80S.mRNA.Met-tRNA[F]). The polypeptide is Eukaryotic translation initiation factor 5 (Tribolium castaneum (Red flour beetle)).